A 94-amino-acid chain; its full sequence is Small ribosomal subunit protein uS19 (94 aa).

It belongs to the universal ribosomal protein uS19 family.

In terms of biological role, protein S19 forms a complex with S13 that binds strongly to the 16S ribosomal RNA. The sequence is that of Small ribosomal subunit protein uS19 from Acetivibrio thermocellus (strain ATCC 27405 / DSM 1237 / JCM 9322 / NBRC 103400 / NCIMB 10682 / NRRL B-4536 / VPI 7372) (Clostridium thermocellum).